A 358-amino-acid chain; its full sequence is Glutamate--cysteine ligase (358 aa).

The protein belongs to the glutamate--cysteine ligase type 2 family. YbdK subfamily.

It catalyses the reaction L-cysteine + L-glutamate + ATP = gamma-L-glutamyl-L-cysteine + ADP + phosphate + H(+). Its function is as follows. Catalyzes the synthesis of gamma-glutamylcysteine (gamma-GC), the main low-molecular-weight thiol compound instead of glutathione in halophilic archaea. The protein is Glutamate--cysteine ligase of Haloferax volcanii (strain ATCC 29605 / DSM 3757 / JCM 8879 / NBRC 14742 / NCIMB 2012 / VKM B-1768 / DS2) (Halobacterium volcanii).